Here is a 136-residue protein sequence, read N- to C-terminus: Probable acyltransferase SID5 (136 aa).

It participates in siderophore biosynthesis. Probable acyltransferase; part of the gene cluster that mediates the biosynthesis of hydroxamate-containing siderophores that play a critical role in virulence via intracellular iron acquisition during macrophage infection. The sequence is that of Probable acyltransferase SID5 from Ajellomyces capsulatus (Darling's disease fungus).